An 88-amino-acid polypeptide reads, in one-letter code: Homeobox protein knotted-1-like 11 (88 aa).

In terms of domain architecture, ELK spans 4–24; that stretch reads ELKEMLLKKYSGCLSRLRSEF. Positions 25-88 form a DNA-binding region, homeobox; TALE-type; that stretch reads LKKRKKGKLP…NQRKRHWKPS (64 aa).

Belongs to the TALE/KNOX homeobox family.

It localises to the nucleus. Probably binds to the DNA sequence 5'-TGAC-3'. The polypeptide is Homeobox protein knotted-1-like 11 (KNOX11) (Zea mays (Maize)).